Here is a 259-residue protein sequence, read N- to C-terminus: Global transcriptional regulator CodY (259 aa).

Residues 1–155 (MELLAKTRKL…SSTVVGMEIL (155 aa)) are GAF domain. The segment at residues 203–222 (ASKIADRVGITRSVIVNALR) is a DNA-binding region (H-T-H motif). Position 215 is a phosphoserine (Ser215).

This sequence belongs to the CodY family.

Its subcellular location is the cytoplasm. Functionally, DNA-binding global transcriptional regulator which is involved in the adaptive response to starvation and acts by directly or indirectly controlling the expression of numerous genes in response to nutrient availability. During rapid exponential growth, CodY is highly active and represses genes whose products allow adaptation to nutrient depletion. This Bacillus mycoides (strain KBAB4) (Bacillus weihenstephanensis) protein is Global transcriptional regulator CodY.